A 347-amino-acid chain; its full sequence is Transcription elongation factor A protein 3 (347 aa).

One can recognise a TFIIS N-terminal domain in the interval 5–82 (EELLRIAKKL…KNWKRLLDSP (78 aa)). Basic and acidic residues predominate over residues 83 to 100 (RTTKGEREEREKAKKEKG). The interval 83 to 168 (RTTKGEREER…TTPSSPSTPT (86 aa)) is disordered. Ser-113 is subject to Phosphoserine. The segment covering 119–131 (GGGEPKTRRDSVD) has biased composition (basic and acidic residues). 2 stretches are compositionally biased toward low complexity: residues 132-142 (SRSSTTSSPKR) and 157-168 (TPTTPSSPSTPT). Phosphoserine is present on Ser-139. The region spanning 186 to 302 (VRDKCVEMLS…EHQMAKTGGT (117 aa)) is the TFIIS central domain. The TFIIS-type zinc finger occupies 305–345 (DLLRCSKCKKKNCTYNQVQTRSADEPMTTFVLCNECGNRWK). The Zn(2+) site is built by Cys-309, Cys-312, Cys-337, and Cys-340.

It belongs to the TFS-II family. Liver, kidney and heart.

Its subcellular location is the nucleus. Functionally, necessary for efficient RNA polymerase II transcription elongation past template-encoded arresting sites. The arresting sites in DNA have the property of trapping a certain fraction of elongating RNA polymerases that pass through, resulting in locked ternary complexes. Cleavage of the nascent transcript by S-II allows the resumption of elongation from the new 3'-terminus. The protein is Transcription elongation factor A protein 3 (Tcea3) of Mus musculus (Mouse).